The chain runs to 358 residues: Ganglioside-induced differentiation-associated protein 1 (358 aa).

Residues 24–105 form the GST N-terminal domain; sequence VHLILYHWTH…YLEQTFLDER (82 aa). Glycyl lysine isopeptide (Lys-Gly) (interchain with G-Cter in ubiquitin) cross-links involve residues K50, K172, K173, K188, and K190. One can recognise a GST C-terminal domain in the interval 153–309; it reads PAYATTRIRS…LISAVLPTAF (157 aa). K203 carries the N6-acetyllysine; alternate modification. A Glycyl lysine isopeptide (Lys-Gly) (interchain with G-Cter in ubiquitin); alternate cross-link involves residue K203. Residues K206, K207, and K214 each participate in a glycyl lysine isopeptide (Lys-Gly) (interchain with G-Cter in ubiquitin) cross-link. 2 consecutive transmembrane segments (helical) span residues 292–312 and 320–340; these read VLGH…FRVA and LGST…FMLF. The segment at 320 to 358 is required for mitochondrial localization; that stretch reads LGSTLVVGLLVGMGYFAFMLFRRRLGSMILALRPRPNYF.

Belongs to the GST superfamily. In terms of assembly, homodimer. Ubiquitinated by PRKN during mitophagy, leading to its degradation and enhancement of mitophagy. Deubiquitinated by USP30. As to expression, expressed in brain, spinal cord, muscles and intestinal villi. In the central nervous system expressed most prominently in the cortex, cerebellum, thalamus, olfactory bulb, and spinal cord. Expressed also in sciatic nerves and in dorsal root ganglia.

It is found in the mitochondrion outer membrane. Its subcellular location is the cytoplasm. Regulates the mitochondrial network by promoting mitochondrial fission. In Mus musculus (Mouse), this protein is Ganglioside-induced differentiation-associated protein 1 (Gdap1).